The primary structure comprises 506 residues: Maturase K (506 aa).

This sequence belongs to the intron maturase 2 family. MatK subfamily.

It is found in the plastid. It localises to the chloroplast. Functionally, usually encoded in the trnK tRNA gene intron. Probably assists in splicing its own and other chloroplast group II introns. This chain is Maturase K, found in Gaultheria procumbens (Wintergreen).